Reading from the N-terminus, the 425-residue chain is Glutamate-1-semialdehyde 2,1-aminomutase (425 aa).

Residue Lys265 is modified to N6-(pyridoxal phosphate)lysine.

This sequence belongs to the class-III pyridoxal-phosphate-dependent aminotransferase family. HemL subfamily. As to quaternary structure, homodimer. Pyridoxal 5'-phosphate is required as a cofactor.

It localises to the cytoplasm. It carries out the reaction (S)-4-amino-5-oxopentanoate = 5-aminolevulinate. Its pathway is porphyrin-containing compound metabolism; protoporphyrin-IX biosynthesis; 5-aminolevulinate from L-glutamyl-tRNA(Glu): step 2/2. The protein is Glutamate-1-semialdehyde 2,1-aminomutase of Laribacter hongkongensis (strain HLHK9).